The sequence spans 449 residues: Phosphoglucosamine mutase (449 aa).

S100 (phosphoserine intermediate) is an active-site residue. S100, D241, D243, and D245 together coordinate Mg(2+). Phosphoserine is present on S100.

Belongs to the phosphohexose mutase family. Mg(2+) is required as a cofactor. In terms of processing, activated by phosphorylation.

The enzyme catalyses alpha-D-glucosamine 1-phosphate = D-glucosamine 6-phosphate. Functionally, catalyzes the conversion of glucosamine-6-phosphate to glucosamine-1-phosphate. This chain is Phosphoglucosamine mutase, found in Clostridium kluyveri (strain NBRC 12016).